The following is a 393-amino-acid chain: Cyclic GMP-AMP synthase-like receptor 1 (393 aa).

Mg(2+) contacts are provided by Glu89, Asp91, and Asp205. Residue 89-91 (EFD) coordinates ATP. GTP contacts are provided by residues Asp205 and 251-258 (RASFYEAE). ATP-binding positions include 255–258 (YEAE), Lys276, and 289–293 (SYHIK).

The protein belongs to the mab-21 family. The cofactor is Mg(2+). Mn(2+) is required as a cofactor.

The enzyme catalyses GTP + ATP = 3',2'-cGAMP + 2 diphosphate. It carries out the reaction GTP + ATP = pppA(2'-5')pG + diphosphate. The catalysed reaction is pppA(2'-5')pG = 3',2'-cGAMP + diphosphate. Its activity is regulated as follows. The enzyme activity is specifically activated by double-stranded RNA (dsRNA). Recognizes long dsRNA (&gt;30 bp) with no preference for 5' RNA phosphorylation. In terms of biological role, nucleotidyltransferase that catalyzes the formation of cyclic GMP-AMP (3',2'-cGAMP) from ATP and GTP and plays a key role in innate immunity. Synthesizes 3',2'-cGAMP in a two-step reaction through production of the linear intermediate pppA(2'-5')pG. Acts as a key sensor of double-stranded RNA (dsRNA), the presence of dsRNA in the cytoplasm being a danger signal that triggers the immune responses. Directly binds dsRNA longer than 35 bp, activating the nucleotidyltransferase activity, leading to synthesis of 3',2'-cGAMP, a second messenger that binds to and activates Sting, thereby triggering the antiviral immune response via activation of the NF-kappa-B transcription factor Rel (Relish). In Drosophila simulans (Fruit fly), this protein is Cyclic GMP-AMP synthase-like receptor 1.